The following is a 179-amino-acid chain: 3-hydroxyanthranilate 3,4-dioxygenase (179 aa).

Residue arginine 47 coordinates O2. Residues histidine 51, glutamate 57, and histidine 96 each coordinate Fe cation. Glutamate 57 lines the substrate pocket. Substrate is bound by residues arginine 100 and glutamate 110. Fe cation is bound by residues cysteine 125, cysteine 128, cysteine 162, and cysteine 165.

It belongs to the 3-HAO family. Requires Fe(2+) as cofactor.

It catalyses the reaction 3-hydroxyanthranilate + O2 = (2Z,4Z)-2-amino-3-carboxymuconate 6-semialdehyde. It participates in cofactor biosynthesis; NAD(+) biosynthesis; quinolinate from L-kynurenine: step 3/3. Its function is as follows. Catalyzes the oxidative ring opening of 3-hydroxyanthranilate to 2-amino-3-carboxymuconate semialdehyde, which spontaneously cyclizes to quinolinate. The chain is 3-hydroxyanthranilate 3,4-dioxygenase from Bacillus thuringiensis (strain Al Hakam).